The primary structure comprises 315 residues: Methionyl-tRNA formyltransferase (315 aa).

113–116 is a binding site for (6S)-5,6,7,8-tetrahydrofolate; it reads SILP.

It belongs to the Fmt family.

It carries out the reaction L-methionyl-tRNA(fMet) + (6R)-10-formyltetrahydrofolate = N-formyl-L-methionyl-tRNA(fMet) + (6S)-5,6,7,8-tetrahydrofolate + H(+). In terms of biological role, attaches a formyl group to the free amino group of methionyl-tRNA(fMet). The formyl group appears to play a dual role in the initiator identity of N-formylmethionyl-tRNA by promoting its recognition by IF2 and preventing the misappropriation of this tRNA by the elongation apparatus. The chain is Methionyl-tRNA formyltransferase from Vibrio cholerae serotype O1 (strain M66-2).